The sequence spans 313 residues: Extracellular metalloprotease (313 aa).

The N-terminal stretch at 1-34 (MKLVPRFRKQWFAYLTVLCLALAAAVSFGVPAKA) is a signal peptide. The tract at residues 35 to 74 (AENPQTSVSNTGKEADATKNQTSKADQVSAPYEGTGKTSK) is disordered. The propeptide occupies 35–93 (AENPQTSVSNTGKEADATKNQTSKADQVSAPYEGTGKTSKSLYGGQTELEKNIQTLQPS). The span at 37-60 (NPQTSVSNTGKEADATKNQTSKAD) shows a compositional bias: polar residues. A disulfide bridge links Cys-131 with Cys-147. Active-site charge relay system residues include His-146 and Ser-267.

Belongs to the peptidase S1B family. In terms of assembly, monomer.

Its subcellular location is the secreted. This chain is Extracellular metalloprotease (mpr), found in Bacillus subtilis (strain 168).